We begin with the raw amino-acid sequence, 165 residues long: Putative 1,2-phenylacetyl-CoA epoxidase, subunit D (165 aa).

As to quaternary structure, monomer.

Its pathway is aromatic compound metabolism; phenylacetate degradation. Functionally, possible component of 1,2-phenylacetyl-CoA epoxidase multicomponent enzyme system which catalyzes the reduction of phenylacetyl-CoA (PA-CoA) to form 1,2-epoxyphenylacetyl-CoA. The subunit D may have a function related to the maturation of the monooxygenase complex, rather than direct involvement in catalysis. PaaD could assist either in maturation of PaaE or PaaA. The polypeptide is Putative 1,2-phenylacetyl-CoA epoxidase, subunit D (paaD) (Escherichia coli (strain K12)).